Consider the following 252-residue polypeptide: tRNA (guanine-N(1)-)-methyltransferase (252 aa).

S-adenosyl-L-methionine contacts are provided by residues Gly-113 and 133–138; that span reads IGDYVL.

The protein belongs to the RNA methyltransferase TrmD family. Homodimer.

The protein localises to the cytoplasm. It carries out the reaction guanosine(37) in tRNA + S-adenosyl-L-methionine = N(1)-methylguanosine(37) in tRNA + S-adenosyl-L-homocysteine + H(+). Specifically methylates guanosine-37 in various tRNAs. This chain is tRNA (guanine-N(1)-)-methyltransferase, found in Baumannia cicadellinicola subsp. Homalodisca coagulata.